A 258-amino-acid polypeptide reads, in one-letter code: Ubiquinone/menaquinone biosynthesis C-methyltransferase UbiE (258 aa).

S-adenosyl-L-methionine contacts are provided by residues Thr81, Asp102, and 130-131; that span reads NA.

This sequence belongs to the class I-like SAM-binding methyltransferase superfamily. MenG/UbiE family.

The catalysed reaction is a 2-demethylmenaquinol + S-adenosyl-L-methionine = a menaquinol + S-adenosyl-L-homocysteine + H(+). It carries out the reaction a 2-methoxy-6-(all-trans-polyprenyl)benzene-1,4-diol + S-adenosyl-L-methionine = a 5-methoxy-2-methyl-3-(all-trans-polyprenyl)benzene-1,4-diol + S-adenosyl-L-homocysteine + H(+). It participates in quinol/quinone metabolism; menaquinone biosynthesis; menaquinol from 1,4-dihydroxy-2-naphthoate: step 2/2. The protein operates within cofactor biosynthesis; ubiquinone biosynthesis. Functionally, methyltransferase required for the conversion of demethylmenaquinol (DMKH2) to menaquinol (MKH2) and the conversion of 2-polyprenyl-6-methoxy-1,4-benzoquinol (DDMQH2) to 2-polyprenyl-3-methyl-6-methoxy-1,4-benzoquinol (DMQH2). The polypeptide is Ubiquinone/menaquinone biosynthesis C-methyltransferase UbiE (Allorhizobium ampelinum (strain ATCC BAA-846 / DSM 112012 / S4) (Agrobacterium vitis (strain S4))).